The sequence spans 747 residues: Histone-lysine N-methyltransferase EZH1 (747 aa).

The disordered stretch occupies residues 188–231 (DEEEEGHNDTSDGKQDDSKEDLPVTRKRKRHAIEGNKKSSKKQF). The span at 194-211 (HNDTSDGKQDDSKEDLPV) shows a compositional bias: basic and acidic residues. Residue K327 forms a Glycyl lysine isopeptide (Lys-Gly) (interchain with G-Cter in SUMO2) linkage. The tract at residues 378 to 421 (SAVAETKEGDSDRDTGNDWASSSSEANSRCQTPTKQKASPAPPQ) is disordered. The segment covering 382 to 393 (ETKEGDSDRDTG) has biased composition (basic and acidic residues). Residues 395-414 (DWASSSSEANSRCQTPTKQK) are compositionally biased toward polar residues. The short motif at 491-496 (QKKKRK) is the Nuclear localization signal element. Positions 504-606 (CRKIQLKKDN…CKVVSCKNCS (103 aa)) constitute a CXC domain. The 116-residue stretch at 613 to 728 (KHLLLAPSDV…AGEELFLDYR (116 aa)) folds into the SET domain.

This sequence belongs to the class V-like SAM-binding methyltransferase superfamily. Histone-lysine methyltransferase family. EZ subfamily. In terms of assembly, component of the PRC2/EED-EZH1 complex, which includes EED, EZH1, SUZ12, RBBP4 and AEBP2. The PRC2/EED-EZH1 is less abundant than the PRC2/EED-EZH2 complex, has weak methyltransferase activity and compacts chromatin in the absence of the methyltransferase cofactor S-adenosyl-L-methionine (SAM). Interacts with EZHIP; the interaction blocks EZH1 methyltransferase activity.

It localises to the nucleus. The catalysed reaction is L-lysyl(27)-[histone H3] + 3 S-adenosyl-L-methionine = N(6),N(6),N(6)-trimethyl-L-lysyl(27)-[histone H3] + 3 S-adenosyl-L-homocysteine + 3 H(+). Polycomb group (PcG) protein. Catalytic subunit of the PRC2/EED-EZH1 complex, which methylates 'Lys-27' of histone H3, leading to transcriptional repression of the affected target gene. Able to mono-, di- and trimethylate 'Lys-27' of histone H3 to form H3K27me1, H3K27me2 and H3K27me3, respectively. Required for embryonic stem cell derivation and self-renewal, suggesting that it is involved in safeguarding embryonic stem cell identity. Compared to EZH2-containing complexes, it is less abundant in embryonic stem cells, has weak methyltransferase activity and plays a less critical role in forming H3K27me3, which is required for embryonic stem cell identity and proper differentiation. In Pongo abelii (Sumatran orangutan), this protein is Histone-lysine N-methyltransferase EZH1 (EZH1).